A 348-amino-acid chain; its full sequence is Phosphate acyltransferase (348 aa).

This sequence belongs to the PlsX family. As to quaternary structure, homodimer. Probably interacts with PlsY.

Its subcellular location is the cytoplasm. It carries out the reaction a fatty acyl-[ACP] + phosphate = an acyl phosphate + holo-[ACP]. It participates in lipid metabolism; phospholipid metabolism. Catalyzes the reversible formation of acyl-phosphate (acyl-PO(4)) from acyl-[acyl-carrier-protein] (acyl-ACP). This enzyme utilizes acyl-ACP as fatty acyl donor, but not acyl-CoA. In Pectobacterium atrosepticum (strain SCRI 1043 / ATCC BAA-672) (Erwinia carotovora subsp. atroseptica), this protein is Phosphate acyltransferase.